Reading from the N-terminus, the 83-residue chain is Gas vesicle protein G1 (83 aa).

This sequence belongs to the gas vesicle GvpG family. As to quaternary structure, gvpF to GvpM interact with each other in vitro, and may form multi-subunit complex(es). Might interact with GvpA1.

It is found in the gas vesicle. Its function is as follows. Proteins GvpF to GvpM might be involved in nucleating gas vesicle formation. A minor component of the gas vesicle. Gas vesicles are hollow, gas filled proteinaceous nanostructures found in several microbial planktonic microorganisms. They allow positioning of halobacteria at the optimal depth for growth in the poorly aerated, shallow brine pools of their habitat. In terms of biological role, expression of a 9.5 kb p-vac DNA fragment containing 2 divergently transcribed regions (gvpD-gvpE-gvpF-gvpG-gvpH-gvpI-gvpJ-gvpK-gvpL-gvpM and gvpA-gvpC-gvpN-gvpO) allows H.volcanii to produce gas vesicles. A minimal gas vesicle can be made in H.volcanii by gvpA1-gvpO1 plus gvpF1-gvpG1-gvpJ1-gvpK1-gvpL1-gvpM1; lack of enough GvpJ1 prevents formation. A similar region restores gas vesicle production in H.halobium without the p-vac locus, but it still has the c-vac locus. This chain is Gas vesicle protein G1 (gvpG11), found in Halobacterium salinarum (strain ATCC 700922 / JCM 11081 / NRC-1) (Halobacterium halobium).